Here is a 401-residue protein sequence, read N- to C-terminus: NADH-ubiquinone oxidoreductase 49 kDa subunit (401 aa).

The protein belongs to the complex I 49 kDa subunit family.

Its subcellular location is the mitochondrion. The enzyme catalyses a ubiquinone + NADH + 5 H(+)(in) = a ubiquinol + NAD(+) + 4 H(+)(out). In terms of biological role, core subunit of the mitochondrial membrane respiratory chain NADH dehydrogenase (Complex I) that is believed to belong to the minimal assembly required for catalysis. Complex I functions in the transfer of electrons from NADH to the respiratory chain. The immediate electron acceptor for the enzyme is believed to be ubiquinone. Component of the iron-sulfur (IP) fragment of the enzyme. This chain is NADH-ubiquinone oxidoreductase 49 kDa subunit (NAD7), found in Acanthamoeba castellanii (Amoeba).